Reading from the N-terminus, the 405-residue chain is MKILVLNAGSSTQKSCLYEIADEAFSTQASQPLWEGKINWTQDRGVAEIEVKTATGATLQESISDDSPQAHLAYMLNTLSDGDTKVIDRLSEIDVVGHRIVHGGEDYRDSVVITEDVKKAIASLSNLAPAHNPVALSGIEAIEKILKDVTQIAVFDTGFHATIPDAAAIYPGPYQWVEQGIRRYGFHGISHQYCSQRAAQILGQDVASGRLITCHLGNGCSLAAIKNGRSIDTTMGFTPLEGLMMGSRSGSVDPGILIYLLRYCDYSVEKLDEILNKASGLKGISGVSSDMREVRKAIAQGNSRAQLAWDIYVHRLRSGIGAMVTSLGGLDALVFTAGVGEHSAEIRQAACEAFGFLGLKLDLQKNQQKPVDEDIATNDSAVRVLVIHTQEDWAIAQHCWQILKN.

Residue asparagine 7 participates in Mg(2+) binding. Residue lysine 14 coordinates ATP. Position 99 (arginine 99) interacts with substrate. The active-site Proton donor/acceptor is aspartate 156. ATP contacts are provided by residues 215 to 219 (HLGNG), 290 to 292 (DMR), and 338 to 342 (GVGEH). Mg(2+) is bound at residue glutamate 391.

It belongs to the acetokinase family. In terms of assembly, homodimer. It depends on Mg(2+) as a cofactor. Mn(2+) serves as cofactor.

It localises to the cytoplasm. The catalysed reaction is acetate + ATP = acetyl phosphate + ADP. It functions in the pathway metabolic intermediate biosynthesis; acetyl-CoA biosynthesis; acetyl-CoA from acetate: step 1/2. Functionally, catalyzes the formation of acetyl phosphate from acetate and ATP. Can also catalyze the reverse reaction. The chain is Acetate kinase from Nostoc punctiforme (strain ATCC 29133 / PCC 73102).